Consider the following 355-residue polypeptide: MTIKVLIIDDSALIRSLLTEIINQQPDLEVVGTAPDPLIAREMIKQKNPDVLTLDVEMPKMDGLDFLERLMRLRPMPVVMISSLTERGSEITMRAMELGAVDFVTKPKISIANGMHEYSEMIADKIRAASRARLIARKPLTPVAGGAGLPLVGNPLISSEKLIIIGASTGGTEAIKSFLMQMPSDCPGILITQHMPAGFTQSFANRLNALCKISVQEAKGGERVLPGHAYIAPGHSHLLLARSGANYVTQLDDGPPVSRHRPSVDVLFSSAANNAGKNAIGVILTGMGKDGAEGMLKMKQAGAYNFAQDEASCVVFGMPKEAIAMGGVDDVSSLNDMPGRVLQYLAANSGRALRV.

One can recognise a Response regulatory domain in the interval 4–121; it reads KVLIIDDSAL…ANGMHEYSEM (118 aa). Aspartate 55 carries the 4-aspartylphosphate modification. The region spanning 156–348 is the CheB-type methylesterase domain; the sequence is LISSEKLIII…GRVLQYLAAN (193 aa). Residues serine 168, histidine 194, and aspartate 290 contribute to the active site.

It belongs to the CheB family. In terms of processing, phosphorylated by CheA. Phosphorylation of the N-terminal regulatory domain activates the methylesterase activity.

The protein localises to the cytoplasm. It catalyses the reaction [protein]-L-glutamate 5-O-methyl ester + H2O = L-glutamyl-[protein] + methanol + H(+). The enzyme catalyses L-glutaminyl-[protein] + H2O = L-glutamyl-[protein] + NH4(+). Functionally, involved in chemotaxis. Part of a chemotaxis signal transduction system that modulates chemotaxis in response to various stimuli. Catalyzes the demethylation of specific methylglutamate residues introduced into the chemoreceptors (methyl-accepting chemotaxis proteins or MCP) by CheR. Also mediates the irreversible deamidation of specific glutamine residues to glutamic acid. The chain is Protein-glutamate methylesterase/protein-glutamine glutaminase from Methylobacillus flagellatus (strain ATCC 51484 / DSM 6875 / VKM B-1610 / KT).